An 89-amino-acid polypeptide reads, in one-letter code: MKPWILLLVMFISGVVMLLPVLGSFWNKDPFLDMIRETEQCWVQPPYKYCEKRCTKIMTCVRPNHTCCWTYCGNICLDNEEPLKSMLNP.

Positions 1-23 (MKPWILLLVMFISGVVMLLPVLG) are cleaved as a signal peptide.

Its subcellular location is the secreted. This Homo sapiens (Human) protein is Protein WFDC9 (WFDC9).